A 113-amino-acid chain; its full sequence is MKKNERIRKNIEFRRVYRRGKSYSNSLLVLYVFKNNNNVDTSRVGISVSKKVGNSVVRSRVKRLISESYRLNCSNIKEKYDLVFVARNKSKDKTYKEIEGSVTNLLKRAGLYN.

The protein belongs to the RnpA family. As to quaternary structure, consists of a catalytic RNA component (M1 or rnpB) and a protein subunit.

The enzyme catalyses Endonucleolytic cleavage of RNA, removing 5'-extranucleotides from tRNA precursor.. Its function is as follows. RNaseP catalyzes the removal of the 5'-leader sequence from pre-tRNA to produce the mature 5'-terminus. It can also cleave other RNA substrates such as 4.5S RNA. The protein component plays an auxiliary but essential role in vivo by binding to the 5'-leader sequence and broadening the substrate specificity of the ribozyme. This is Ribonuclease P protein component from Clostridium novyi (strain NT).